The following is a 362-amino-acid chain: 3-dehydroquinate synthase (362 aa).

NAD(+) is bound by residues 70 to 75 (EGEQYK), 104 to 108 (GVIGD), 128 to 129 (TT), lysine 141, lysine 150, and 168 to 171 (TLTT). Residues glutamate 183, histidine 246, and histidine 263 each contribute to the Zn(2+) site.

Belongs to the sugar phosphate cyclases superfamily. Dehydroquinate synthase family. Co(2+) serves as cofactor. Requires Zn(2+) as cofactor. NAD(+) is required as a cofactor.

Its subcellular location is the cytoplasm. The catalysed reaction is 7-phospho-2-dehydro-3-deoxy-D-arabino-heptonate = 3-dehydroquinate + phosphate. Its pathway is metabolic intermediate biosynthesis; chorismate biosynthesis; chorismate from D-erythrose 4-phosphate and phosphoenolpyruvate: step 2/7. Catalyzes the conversion of 3-deoxy-D-arabino-heptulosonate 7-phosphate (DAHP) to dehydroquinate (DHQ). The chain is 3-dehydroquinate synthase from Histophilus somni (strain 129Pt) (Haemophilus somnus).